Here is a 573-residue protein sequence, read N- to C-terminus: Vacuolar protein 8 (573 aa).

The segment at 1-36 (MAASAADRMGRQRMSGLSCSAPPRPTVVTNPGNKQD) is disordered. A compositionally biased stretch (polar residues) spans 27–36 (VVTNPGNKQD). ARM repeat units lie at residues 60–97 (NRGE…FAEI), 98–137 (TEKD…NLAV), 139–178 (NENK…NLAT), 180–219 (EANK…NMTH), 221–260 (DQNR…NIAV), 264–303 (NRKK…NLAS), 305–344 (SDYQ…NISI), 346–386 (PLNE…NLAA), and 430–469 (DELK…NLSS).

Belongs to the beta-catenin family.

The protein resides in the vacuole membrane. Functions in both vacuole inheritance and protein targeting from the cytoplasm to vacuole. This Yarrowia lipolytica (strain CLIB 122 / E 150) (Yeast) protein is Vacuolar protein 8 (VAC8).